The chain runs to 635 residues: MAKNYTVADVVNIDSDSDSDDDNGGVIGMVPSLASLIENQKVSIADAATVAPRETLECRSFWKAGENFVIPSSVTLTAIGMVEHARVHPKFLHSNATSHKWAFGAIAELLDNAVDEIQNGATVVKIDKINIVKDNTPALVFQDNGGGMDPNGIRKCMSLGYSSKKSNTTIGQYGNGFKTSTMRLGADAMVFSRSTRGGKSTQSIGLLSYTFLRKTGQDDVIVPMIDFDISSDSPQPIIYGSPGDWSTNLNILLKWSPFSTMVELLQQFEDIGTHGTKVIIYNLWLNDEGIYELSFDDDDVDIRLRDENAQDGKRLHAKTLEVRSHISYRYRHSLRAYISMLYLKKFKNFKIILRGVSVAQFNIADEFRHPETIMYKPQAAAVDYAATGIKVGFIKEAPKLPICGFNVYHKNRLIRPFWKVVLEGSTRGNGVMGVLEANFIEPAHDKQDFERSSLFLRLEARLKRITSDYWQNHCHIFGYQTAQIPADKSKRTVIPDQPPTVNTYNPSPLPSDRISHGGPIIREINLSNATSSRTAAVAAPHLRNYTGLRNNFQPVQLNPQPPAAGDTGNNLVGKLAAEIREENLQLFMRCEEYVKKENEVEQTVKSLEKELEEIKSKCAQLALLVDAKKKEMQQV.

The segment at 491-511 (RTVIPDQPPTVNTYNPSPLPS) is disordered. The stretch at 588–635 (MRCEEYVKKENEVEQTVKSLEKELEEIKSKCAQLALLVDAKKKEMQQV) forms a coiled coil.

It belongs to the MORC ATPase protein family. Homodimer and heterodimer with MORC6. Component of an RNA-directed DNA methylation (RdDM) complex that contains at least MORC6, MORC1/CRT1, MORC2, SWI3D and SUVH9. Binds directly to SUVH2 and SUVH9. Interacts with the resistance proteins RCY1, RPM1, SNC1, RPP8, SSI4 and RPS2. The interactions with various resistance proteins are disrupted when these resistance proteins are activated. Interacts with the PAMP recognition receptor FLS2. The cofactor is Mg(2+). Requires Mn(2+) as cofactor. Expressed constitutively.

Its subcellular location is the nucleus. It localises to the endosome. Mediator of defense signaling triggered by distinct classes of R proteins. Required during hypersensitive response (HR) that confers disease resistance to turnip crinkle virus (TCV). Exhibits ATPase activity. Contributes to resistance against Pseudomonas syringae and Hyaloperonospora arabidopsidis, at early stages prior to cytosolic calcium ions Ca(2+) accumulation. Required for pathogen-associated molecular pattern (PAMP)-triggered immunity (PTI), basal resistance, non-host resistance and systemic acquired resistance (SAR). Binds DNA/RNA in a non-specific manner and exhibits endonuclease activity. Probably involved in DNA repair. Required for both RPP8- and SSI4-mediated resistance responses, thus being involved in both TIR- and CC-NB-LRR pathways. Involved in RNA-directed DNA methylation (RdDM) as a component of the RdDM machinery and required for gene silencing. May also be involved in the regulation of chromatin architecture to maintain gene silencing. This chain is Protein MICRORCHIDIA 1, found in Arabidopsis thaliana (Mouse-ear cress).